Reading from the N-terminus, the 362-residue chain is sn-glycerol-3-phosphate import ATP-binding protein UgpC (362 aa).

Residues 4–235 form the ABC transporter domain; sequence LSFRNVKKTY…PASTFVAGFI (232 aa). Residue 37 to 44 participates in ATP binding; the sequence is GPSGCGKS.

Belongs to the ABC transporter superfamily. sn-glycerol-3-phosphate importer (TC 3.A.1.1.3) family. The complex is composed of two ATP-binding proteins (UgpC), two transmembrane proteins (UgpA and UgpE) and a solute-binding protein (UgpB).

The protein resides in the cell inner membrane. The catalysed reaction is sn-glycerol 3-phosphate(out) + ATP + H2O = sn-glycerol 3-phosphate(in) + ADP + phosphate + H(+). Its function is as follows. Part of the ABC transporter complex UgpBAEC involved in sn-glycerol-3-phosphate (G3P) import. Responsible for energy coupling to the transport system. The polypeptide is sn-glycerol-3-phosphate import ATP-binding protein UgpC (Bordetella parapertussis (strain 12822 / ATCC BAA-587 / NCTC 13253)).